Consider the following 446-residue polypeptide: Peroxisomal biogenesis factor 3 (446 aa).

The Peroxisomal segment spans residues 1–12 (MARTGLQRHRGK). A helical transmembrane segment spans residues 13–33 (LLGTGAVLGGLVVAGVVAAVA). Residues 34-446 (AKRWVRRQQQ…SASVYSNFGV (413 aa)) lie on the Cytoplasmic side of the membrane. The disordered stretch occupies residues 101-122 (RAGEDDEQGSGGHASAGEGSVS).

The protein belongs to the peroxin-3 family.

It is found in the peroxisome membrane. Involved in peroxisome biosynthesis. This is Peroxisomal biogenesis factor 3 (PEX3) from Eremothecium gossypii (strain ATCC 10895 / CBS 109.51 / FGSC 9923 / NRRL Y-1056) (Yeast).